Consider the following 155-residue polypeptide: SsrA-binding protein (155 aa).

A disordered region spans residues 135–155 (KRQDIKQRDVERETRREIMRH).

Belongs to the SmpB family.

The protein localises to the cytoplasm. Functionally, required for rescue of stalled ribosomes mediated by trans-translation. Binds to transfer-messenger RNA (tmRNA), required for stable association of tmRNA with ribosomes. tmRNA and SmpB together mimic tRNA shape, replacing the anticodon stem-loop with SmpB. tmRNA is encoded by the ssrA gene; the 2 termini fold to resemble tRNA(Ala) and it encodes a 'tag peptide', a short internal open reading frame. During trans-translation Ala-aminoacylated tmRNA acts like a tRNA, entering the A-site of stalled ribosomes, displacing the stalled mRNA. The ribosome then switches to translate the ORF on the tmRNA; the nascent peptide is terminated with the 'tag peptide' encoded by the tmRNA and targeted for degradation. The ribosome is freed to recommence translation, which seems to be the essential function of trans-translation. In Oleidesulfovibrio alaskensis (strain ATCC BAA-1058 / DSM 17464 / G20) (Desulfovibrio alaskensis), this protein is SsrA-binding protein.